The chain runs to 231 residues: Flagellar L-ring protein (231 aa).

A signal peptide spans 1-18 (MKHLLSVFALGGAVLLAG). Residue Cys19 is the site of N-palmitoyl cysteine attachment. A lipid anchor (S-diacylglycerol cysteine) is attached at Cys19.

Belongs to the FlgH family. The basal body constitutes a major portion of the flagellar organelle and consists of four rings (L,P,S, and M) mounted on a central rod.

The protein resides in the cell outer membrane. Its subcellular location is the bacterial flagellum basal body. Functionally, assembles around the rod to form the L-ring and probably protects the motor/basal body from shearing forces during rotation. This is Flagellar L-ring protein from Pseudomonas entomophila (strain L48).